Reading from the N-terminus, the 247-residue chain is Probable transcriptional regulatory protein Dalk_2958 (247 aa).

This sequence belongs to the TACO1 family.

Its subcellular location is the cytoplasm. The sequence is that of Probable transcriptional regulatory protein Dalk_2958 from Desulfatibacillum aliphaticivorans.